A 347-amino-acid chain; its full sequence is Biotin synthase (347 aa).

Residues 54–273 form the Radical SAM core domain; it reads NHVETASLLS…IAVARIMMPK (220 aa). [4Fe-4S] cluster-binding residues include C69, C73, and C76. The [2Fe-2S] cluster site is built by C113, C144, C204, and R277.

It belongs to the radical SAM superfamily. Biotin synthase family. As to quaternary structure, homodimer. The cofactor is [4Fe-4S] cluster. It depends on [2Fe-2S] cluster as a cofactor.

The catalysed reaction is (4R,5S)-dethiobiotin + (sulfur carrier)-SH + 2 reduced [2Fe-2S]-[ferredoxin] + 2 S-adenosyl-L-methionine = (sulfur carrier)-H + biotin + 2 5'-deoxyadenosine + 2 L-methionine + 2 oxidized [2Fe-2S]-[ferredoxin]. The protein operates within cofactor biosynthesis; biotin biosynthesis; biotin from 7,8-diaminononanoate: step 2/2. In terms of biological role, catalyzes the conversion of dethiobiotin (DTB) to biotin by the insertion of a sulfur atom into dethiobiotin via a radical-based mechanism. This chain is Biotin synthase, found in Afipia carboxidovorans (strain ATCC 49405 / DSM 1227 / KCTC 32145 / OM5) (Oligotropha carboxidovorans).